We begin with the raw amino-acid sequence, 70 residues long: DNA-directed RNA polymerase subunit omega (70 aa).

This sequence belongs to the RNA polymerase subunit omega family. As to quaternary structure, the RNAP catalytic core consists of 2 alpha, 1 beta, 1 beta' and 1 omega subunit. When a sigma factor is associated with the core the holoenzyme is formed, which can initiate transcription.

The enzyme catalyses RNA(n) + a ribonucleoside 5'-triphosphate = RNA(n+1) + diphosphate. Promotes RNA polymerase assembly. Latches the N- and C-terminal regions of the beta' subunit thereby facilitating its interaction with the beta and alpha subunits. The chain is DNA-directed RNA polymerase subunit omega from Bacillus cytotoxicus (strain DSM 22905 / CIP 110041 / 391-98 / NVH 391-98).